A 213-amino-acid chain; its full sequence is Orotate phosphoribosyltransferase (213 aa).

Lys-26 contributes to the 5-phospho-alpha-D-ribose 1-diphosphate binding site. 34–35 (FF) contacts orotate. 5-phospho-alpha-D-ribose 1-diphosphate contacts are provided by residues 72–73 (YK), Arg-98, Lys-99, Lys-102, His-104, and 123–131 (DDVISAGTS). 2 residues coordinate orotate: Ser-127 and Arg-155.

Belongs to the purine/pyrimidine phosphoribosyltransferase family. PyrE subfamily. In terms of assembly, homodimer. The cofactor is Mg(2+).

The catalysed reaction is orotidine 5'-phosphate + diphosphate = orotate + 5-phospho-alpha-D-ribose 1-diphosphate. Its pathway is pyrimidine metabolism; UMP biosynthesis via de novo pathway; UMP from orotate: step 1/2. Catalyzes the transfer of a ribosyl phosphate group from 5-phosphoribose 1-diphosphate to orotate, leading to the formation of orotidine monophosphate (OMP). The polypeptide is Orotate phosphoribosyltransferase (Neisseria meningitidis serogroup A / serotype 4A (strain DSM 15465 / Z2491)).